The following is a 590-amino-acid chain: Acetylcholinesterase (590 aa).

An N-terminal signal peptide occupies residues 1–24 (MREMNLLVTSSLGVLLHLVVLCQA). Asparagine 83 carries N-linked (GlcNAc...) asparagine glycosylation. A disulfide bridge links cysteine 91 with cysteine 118. Serine 224 acts as the Acyl-ester intermediate in catalysis. Cysteines 278 and 289 form a disulfide. The active-site Charge relay system is glutamate 351. A disulfide bond links cysteine 426 and cysteine 545. The N-linked (GlcNAc...) asparagine glycan is linked to asparagine 440. Histidine 464 acts as the Charge relay system in catalysis. Asparagine 481 and asparagine 557 each carry an N-linked (GlcNAc...) asparagine glycan. Residue serine 567 is the site of GPI-anchor amidated serine attachment. The propeptide at 568-590 (SGTSSSKGIIFYVLFSILYLIFY) is removed in mature form.

The protein belongs to the type-B carboxylesterase/lipase family. As to quaternary structure, isoform H form is a homodimer; the asymmetric form is a disulfide-bonded oligomer composed of a collagenic subunit (Q) and a variable number of T catalytic subunits. Post-translationally, an interchain disulfide bond is present in what becomes position 596 of the T isoform. Found in the synapses and to a lower extent in extrajunctional areas of muscle and nerve, and on erythrocyte membranes.

The protein resides in the cell membrane. Its subcellular location is the synapse. The catalysed reaction is acetylcholine + H2O = choline + acetate + H(+). Terminates signal transduction at the neuromuscular junction by rapid hydrolysis of the acetylcholine released into the synaptic cleft. May be involved in cell-cell interactions. In Torpedo marmorata (Marbled electric ray), this protein is Acetylcholinesterase (ache).